Here is a 491-residue protein sequence, read N- to C-terminus: Angiopoietin-related protein 1 (491 aa).

The first 23 residues, 1–23, serve as a signal peptide directing secretion; sequence MKAFIWTLSVLFFLLMGIGHGRG. Positions 80 to 168 form a coiled coil; it reads ITRMDLENLK…LNVTTEMLKM (89 aa). N160 and N188 each carry an N-linked (GlcNAc...) asparagine glycan. Positions 271 to 491 constitute a Fibrinogen C-terminal domain; sequence FINEGPYKDC…AVQMLIKPID (221 aa). 2 cysteine pairs are disulfide-bonded: C280/C309 and C432/C445.

The protein localises to the secreted. The chain is Angiopoietin-related protein 1 (ANGPTL1) from Bos taurus (Bovine).